A 605-amino-acid chain; its full sequence is Protein ZRG17 (605 aa).

Residues 1 to 225 (METPQMNAIQ…DLLSNLPWPK (225 aa)) lie on the Cytoplasmic side of the membrane. Ser16 and Ser131 each carry phosphoserine. The tract at residues 118–178 (PAPKLVPPPP…PSSAASRTSF (61 aa)) is disordered. Polar residues predominate over residues 143–176 (SKRSSMTLDSPFNFTTSTLQPHQQTPPSSAASRT). A helical membrane pass occupies residues 226–246 (AYIQLSIAALQIFACLITFQV). At 247–254 (GHLYSWSN) the chain is on the lumenal side. A helical membrane pass occupies residues 255 to 275 (FITLSHFITYDIIGSLVIIFV). The Cytoplasmic segment spans residues 276–287 (ENLSQFQVWFTG). The chain crosses the membrane as a helical span at residues 288–308 (TITFPFGLNRIDVLLSFALAV). Ser309 is a topological domain (lumenal). The chain crosses the membrane as a helical span at residues 310-330 (LCFVGLDLLFHIIEEFIVLFV). Over 331-363 (ESGSSLTNNHDHDEINEQIPHSHIANANDSQNE) the chain is Cytoplasmic. Residues 364–384 (NITLWYSILMINLVLSTLSLY) traverse the membrane as a helical segment. At 385–399 (KTFYANKYSNLKTKN) the chain is on the lumenal side. A helical transmembrane segment spans residues 400–420 (PIITITYTAYLFIYPLLLDLL). Topologically, residues 421–422 (SS) are cytoplasmic. The chain crosses the membrane as a helical span at residues 423 to 443 (ISDYLATLVISSLILWHGLTI). The Lumenal segment spans residues 444–545 (ARWTSTVLLM…ERLSEFKSRY (102 aa)). The span at 473-482 (DTTAHTQQVE) shows a compositional bias: polar residues. Residues 473-497 (DTTAHTQQVESKAAKEKPSVRPRSM) form a disordered region. Ser498 is subject to Phosphoserine. The helical transmembrane segment at 546–566 (ILNYDDIVISKVNFTLYVVLI) threads the bilayer. The Cytoplasmic portion of the chain corresponds to 567–605 (KITMKGGSDDDELMLRLAIDKCIQTSIPTCETTIDIDRI).

The protein localises to the endoplasmic reticulum membrane. This is Protein ZRG17 (ZRG17) from Saccharomyces cerevisiae (strain ATCC 204508 / S288c) (Baker's yeast).